The following is a 102-amino-acid chain: Large ribosomal subunit protein bL21 (102 aa).

This sequence belongs to the bacterial ribosomal protein bL21 family. Part of the 50S ribosomal subunit. Contacts protein L20.

Functionally, this protein binds to 23S rRNA in the presence of protein L20. This chain is Large ribosomal subunit protein bL21, found in Nitratidesulfovibrio vulgaris (strain ATCC 29579 / DSM 644 / CCUG 34227 / NCIMB 8303 / VKM B-1760 / Hildenborough) (Desulfovibrio vulgaris).